We begin with the raw amino-acid sequence, 359 residues long: Innexin inx2 (359 aa).

At 1–22 the chain is on the cytoplasmic side; it reads MFDVFGSVKGLLKLDSVCIDNN. Residues 23 to 43 traverse the membrane as a helical segment; the sequence is LFRLHYKATVIILIAFSLLVT. The Extracellular segment spans residues 44 to 109; the sequence is SRQYIGDPID…KDEVKYHKYY (66 aa). The helical transmembrane segment at 110–130 threads the bilayer; the sequence is QWVCFVLFFQAILFYIPRYLW. The Cytoplasmic segment spans residues 131-180; that stretch reads KTWEGGRIKMLVLDLNSPVVNEQSKADRKKLLVDYFATNLHTQNFYAYRF. Residues 181–201 traverse the membrane as a helical segment; it reads FICEALNFVNVVGQIYFMDLF. Residues 202–266 are Extracellular-facing; that stretch reads LDGEFTTYGS…VLPLNIVNEK (65 aa). Residues 267 to 287 form a helical membrane-spanning segment; that stretch reads IYVFLWFWFVILSVLTGIGLV. The Cytoplasmic segment spans residues 288 to 359; it reads YRLATAMGPQ…AKKLEGKEIV (72 aa).

The protein belongs to the pannexin family. Widespread expression in embryo, in anterior and posterior row of neural precursors, midline precursors and in epithelial sheet of stomodeum.

Its subcellular location is the cell membrane. The protein resides in the cell junction. The protein localises to the gap junction. Its function is as follows. Structural components of the gap junctions. The sequence is that of Innexin inx2 (inx2) from Schistocerca americana (American grasshopper).